Here is a 350-residue protein sequence, read N- to C-terminus: MIKVKSPGRVNLIGEHTDYTYGYVMPMAINLYTKIEAEKHGEVILYSEHFGEERKFSLNDLRKENSWIDYVKGIFWVLKESDYEVGGIKGRVSGNLPLGAGLSSSASFEVGILETLDKLYNLKLDSLSKVLLAKKAENEFVGVPCGILDQFAVVFGREGNVIFLDTHTLDYEYIPFPKDVSILVFYTGVRRELASSEYAERKHIAEESLKILGKGSSKEVREGELSKLPPLHRKFFGYIVRENARVLEVRDALKEGNVEEVGKILTTAHWDLAKNYEVSCKELDFFVERALKLGAYGARLTGAGFGGSAIALVDKEDAETIGEEILREYLKRFPWKARHFIVEPSDGVGI.

15–18 (EHTD) is a substrate binding site. ATP is bound by residues Ser-47 and 99-105 (GAGLSSS). Residues Ser-105 and Glu-137 each contribute to the Mg(2+) site. Asp-149 serves as the catalytic Proton acceptor. Tyr-198 serves as a coordination point for substrate.

It belongs to the GHMP kinase family. GalK subfamily.

It is found in the cytoplasm. It carries out the reaction alpha-D-galactose + ATP = alpha-D-galactose 1-phosphate + ADP + H(+). The protein operates within carbohydrate metabolism; galactose metabolism. In terms of biological role, catalyzes the transfer of the gamma-phosphate of ATP to D-galactose to form alpha-D-galactose-1-phosphate (Gal-1-P). In Pyrococcus horikoshii (strain ATCC 700860 / DSM 12428 / JCM 9974 / NBRC 100139 / OT-3), this protein is Galactokinase.